The chain runs to 430 residues: Trigger factor (430 aa).

Positions 157–242 constitute a PPIase FKBP-type domain; sequence GDLVALETWS…AVEVSEPVLP (86 aa).

The protein belongs to the FKBP-type PPIase family. Tig subfamily.

The protein resides in the cytoplasm. The enzyme catalyses [protein]-peptidylproline (omega=180) = [protein]-peptidylproline (omega=0). Involved in protein export. Acts as a chaperone by maintaining the newly synthesized protein in an open conformation. Functions as a peptidyl-prolyl cis-trans isomerase. The sequence is that of Trigger factor from Xanthomonas axonopodis pv. citri (strain 306).